Here is a 274-residue protein sequence, read N- to C-terminus: MAIKTYKPTSAGRRHQTCSAFDEITTSTPEKSLIVTIKKTGGRNSFGRITARHIGGGHKKKYRIIDFRRNKVEVPAKVASIEYDPNRSARIALLHYADGAKRYILAPLDLKVGDSIVASSNADIKPGNALPLRAIPLGTIIHNIELKIGKGGQLARSAGTFAQLMAKEGKYAQVKLPSGEVRMVLLDCMATIGQVGNIDHENVSIGKAGRSRWLGRRPKVRGVAMNPVDHPHGGGEGRTSGGRHPVTPWGIPTKGYKTRKNKTSTRFIVKKRSK.

The disordered stretch occupies residues 223 to 257 (VAMNPVDHPHGGGEGRTSGGRHPVTPWGIPTKGYK).

Belongs to the universal ribosomal protein uL2 family. In terms of assembly, part of the 50S ribosomal subunit. Forms a bridge to the 30S subunit in the 70S ribosome.

One of the primary rRNA binding proteins. Required for association of the 30S and 50S subunits to form the 70S ribosome, for tRNA binding and peptide bond formation. It has been suggested to have peptidyltransferase activity; this is somewhat controversial. Makes several contacts with the 16S rRNA in the 70S ribosome. This Geobacter sulfurreducens (strain ATCC 51573 / DSM 12127 / PCA) protein is Large ribosomal subunit protein uL2.